An 882-amino-acid polypeptide reads, in one-letter code: Valine--tRNA ligase (882 aa).

The 'HIGH' region signature appears at 45–55; the sequence is PNVTGKLHLGH. Residues 519–523 carry the 'KMSKS' region motif; the sequence is KMSKS. Residue Lys522 coordinates ATP. Positions 808–882 form a coiled coil; the sequence is LADLLNVEEE…RIAEMHKLVK (75 aa).

Belongs to the class-I aminoacyl-tRNA synthetase family. ValS type 1 subfamily. In terms of assembly, monomer.

The protein resides in the cytoplasm. The catalysed reaction is tRNA(Val) + L-valine + ATP = L-valyl-tRNA(Val) + AMP + diphosphate. Functionally, catalyzes the attachment of valine to tRNA(Val). As ValRS can inadvertently accommodate and process structurally similar amino acids such as threonine, to avoid such errors, it has a 'posttransfer' editing activity that hydrolyzes mischarged Thr-tRNA(Val) in a tRNA-dependent manner. The polypeptide is Valine--tRNA ligase (Streptococcus pyogenes serotype M18 (strain MGAS8232)).